Consider the following 364-residue polypeptide: Ribosomal RNA large subunit methyltransferase F (364 aa).

Low complexity predominate over residues 1-17; the sequence is MPKPAIKTAAKPATSSA. The segment at 1 to 53 is disordered; it reads MPKPAIKTAAKPATSSAGKRGKPNTPKSVAKPKTAKPKTASKPKVKPGEKKRL. The span at 33-53 shows a compositional bias: basic residues; the sequence is KTAKPKTASKPKVKPGEKKRL.

Belongs to the methyltransferase superfamily. METTL16/RlmF family.

It localises to the cytoplasm. It carries out the reaction adenosine(1618) in 23S rRNA + S-adenosyl-L-methionine = N(6)-methyladenosine(1618) in 23S rRNA + S-adenosyl-L-homocysteine + H(+). Its function is as follows. Specifically methylates the adenine in position 1618 of 23S rRNA. This is Ribosomal RNA large subunit methyltransferase F from Shewanella sp. (strain MR-7).